A 206-amino-acid polypeptide reads, in one-letter code: MRGKLITLEGIDGSGKSTVAKKIQENPEIQVFDPVFTREPTRGTLTGTAVENAIQSETDQLAELFLFTADHAEHLAKLVKPALANGKNVISDRYSDSRYAYQGVTLKSRFENPLEWVRSLHSGWTVVPDLTFLFDIEPEIAVERCGKRGEQTKFEKIEFLQNVRENFLILAAEDPGRFVVIDASRPQEEVEKKVIKKVLEFIQRIS.

10 to 17 contacts ATP; that stretch reads GIDGSGKS.

The protein belongs to the thymidylate kinase family.

It carries out the reaction dTMP + ATP = dTDP + ADP. This chain is Probable thymidylate kinase, found in Methanosarcina mazei (strain ATCC BAA-159 / DSM 3647 / Goe1 / Go1 / JCM 11833 / OCM 88) (Methanosarcina frisia).